Reading from the N-terminus, the 169-residue chain is PTS system glucose-specific EIIA component (169 aa).

The PTS EIIA type-1 domain occupies aspartate 39 to asparagine 143. 2 residues coordinate Zn(2+): histidine 76 and histidine 91. Histidine 91 acts as the Tele-phosphohistidine intermediate; for EIIA activity in catalysis. Phosphohistidine; by HPr is present on histidine 91.

Heterodimer with glycerol kinase (glpk). The cofactor is Zn(2+).

It is found in the cytoplasm. The phosphoenolpyruvate-dependent sugar phosphotransferase system (sugar PTS), a major carbohydrate active transport system, catalyzes the phosphorylation of incoming sugar substrates concomitantly with their translocation across the cell membrane. The enzyme II complex composed of PtsG and Crr is involved in glucose transport. The chain is PTS system glucose-specific EIIA component (crr) from Escherichia coli O6:H1 (strain CFT073 / ATCC 700928 / UPEC).